The following is a 278-amino-acid chain: Ribosomal RNA small subunit methyltransferase A (278 aa).

S-adenosyl-L-methionine-binding residues include Asn27, Leu29, Gly54, Glu75, Asp101, and Asn120.

Belongs to the class I-like SAM-binding methyltransferase superfamily. rRNA adenine N(6)-methyltransferase family. RsmA subfamily.

It localises to the cytoplasm. It carries out the reaction adenosine(1518)/adenosine(1519) in 16S rRNA + 4 S-adenosyl-L-methionine = N(6)-dimethyladenosine(1518)/N(6)-dimethyladenosine(1519) in 16S rRNA + 4 S-adenosyl-L-homocysteine + 4 H(+). In terms of biological role, specifically dimethylates two adjacent adenosines (A1518 and A1519) in the loop of a conserved hairpin near the 3'-end of 16S rRNA in the 30S particle. May play a critical role in biogenesis of 30S subunits. This is Ribosomal RNA small subunit methyltransferase A from Zymomonas mobilis subsp. mobilis (strain ATCC 31821 / ZM4 / CP4).